The chain runs to 390 residues: Chorismate synthase (390 aa).

Residues arginine 39 and arginine 45 each contribute to the NADP(+) site. Residues 132–134 (RSS), 253–254 (NA), glycine 298, 313–317 (KPIPT), and arginine 339 contribute to the FMN site.

The protein belongs to the chorismate synthase family. In terms of assembly, homotetramer. FMNH2 is required as a cofactor.

The enzyme catalyses 5-O-(1-carboxyvinyl)-3-phosphoshikimate = chorismate + phosphate. It participates in metabolic intermediate biosynthesis; chorismate biosynthesis; chorismate from D-erythrose 4-phosphate and phosphoenolpyruvate: step 7/7. Functionally, catalyzes the anti-1,4-elimination of the C-3 phosphate and the C-6 proR hydrogen from 5-enolpyruvylshikimate-3-phosphate (EPSP) to yield chorismate, which is the branch point compound that serves as the starting substrate for the three terminal pathways of aromatic amino acid biosynthesis. This reaction introduces a second double bond into the aromatic ring system. The sequence is that of Chorismate synthase from Bacillus licheniformis (strain ATCC 14580 / DSM 13 / JCM 2505 / CCUG 7422 / NBRC 12200 / NCIMB 9375 / NCTC 10341 / NRRL NRS-1264 / Gibson 46).